A 136-amino-acid chain; its full sequence is Large ribosomal subunit protein bL20c (136 aa).

It belongs to the bacterial ribosomal protein bL20 family.

It is found in the plastid. The protein localises to the chloroplast. Its function is as follows. Binds directly to 23S ribosomal RNA and is necessary for the in vitro assembly process of the 50S ribosomal subunit. It is not involved in the protein synthesizing functions of that subunit. This is Large ribosomal subunit protein bL20c from Huperzia lucidula (Shining clubmoss).